The chain runs to 294 residues: Elongation factor Ts (294 aa).

The segment at 81–84 (TDFV) is involved in Mg(2+) ion dislocation from EF-Tu.

Belongs to the EF-Ts family.

The protein localises to the cytoplasm. Associates with the EF-Tu.GDP complex and induces the exchange of GDP to GTP. It remains bound to the aminoacyl-tRNA.EF-Tu.GTP complex up to the GTP hydrolysis stage on the ribosome. The polypeptide is Elongation factor Ts (tsf) (Mycoplasmopsis pulmonis (strain UAB CTIP) (Mycoplasma pulmonis)).